The primary structure comprises 83 residues: Acyl carrier protein (83 aa).

The region spanning 2–77 is the Carrier domain; that stretch reads NEILSKIKSI…DANQYIKKYL (76 aa). Position 37 is an O-(pantetheine 4'-phosphoryl)serine (serine 37).

It belongs to the acyl carrier protein (ACP) family. 4'-phosphopantetheine is transferred from CoA to a specific serine of apo-ACP by AcpS. This modification is essential for activity because fatty acids are bound in thioester linkage to the sulfhydryl of the prosthetic group.

Its subcellular location is the cytoplasm. It participates in lipid metabolism; fatty acid biosynthesis. Carrier of the growing fatty acid chain in fatty acid biosynthesis. This Karelsulcia muelleri (strain GWSS) (Sulcia muelleri) protein is Acyl carrier protein.